A 422-amino-acid chain; its full sequence is UDP-N-acetylglucosamine 1-carboxyvinyltransferase (422 aa).

Position 22-23 (22-23 (KN)) interacts with phosphoenolpyruvate. Residue Arg92 coordinates UDP-N-acetyl-alpha-D-glucosamine. Catalysis depends on Cys116, which acts as the Proton donor. Cys116 is modified (2-(S-cysteinyl)pyruvic acid O-phosphothioketal). Residues 121 to 125 (RPIDL), Asp307, and Leu329 each bind UDP-N-acetyl-alpha-D-glucosamine.

Belongs to the EPSP synthase family. MurA subfamily.

The protein resides in the cytoplasm. It carries out the reaction phosphoenolpyruvate + UDP-N-acetyl-alpha-D-glucosamine = UDP-N-acetyl-3-O-(1-carboxyvinyl)-alpha-D-glucosamine + phosphate. Its pathway is cell wall biogenesis; peptidoglycan biosynthesis. Functionally, cell wall formation. Adds enolpyruvyl to UDP-N-acetylglucosamine. The polypeptide is UDP-N-acetylglucosamine 1-carboxyvinyltransferase (Sulfurovum sp. (strain NBC37-1)).